The primary structure comprises 351 residues: CCN family member 3 (351 aa).

A signal peptide spans 1–24 (METGGGQGLPVLLLLLLLLRPCEV). The IGFBP N-terminal domain occupies 27–101 (REAACPRPCG…GGGAGICMVL (75 aa)). 6 disulfides stabilise this stretch: C31–C57, C35–C59, C39–C60, C46–C63, C71–C85, and C77–C98. One can recognise a VWFC domain in the interval 104–170 (DNCVFDGMIY…GECCEKWVCD (67 aa)). One can recognise a TSP type-1 domain in the interval 201-246 (NCIEQTTEWSACSKSCGMGFSTRVTNRNQQCEMVKQTRLCMMRPCE). Cystine bridges form between C258-C295, C275-C309, C286-C325, C289-C327, and C294-C331. Positions 258 to 332 (CIQTKKSMKA…NTCVCHGNCP (75 aa)) constitute a CTCK domain. A glycan (N-linked (GlcNAc...) asparagine) is linked at N274.

The protein belongs to the CCN family. Brain and heart, and at a lower level in muscle and intestine, in the embryo. Lung and less so in brain and spleen, in adult chicken.

It is found in the secreted. It localises to the cytoplasm. The protein resides in the cell junction. Its subcellular location is the gap junction. Functionally, immediate-early protein likely to play a role in cell growth regulation. Its overexpression is associated with tumorigenesis and expression of a N-terminal-truncated version of CCN3 gene in chicken embryonic fibroblasts (CEF) is sufficient to induce the transformation of CEF in vitro. This Gallus gallus (Chicken) protein is CCN family member 3 (CCN3).